Consider the following 743-residue polypeptide: NAD(P)H-quinone oxidoreductase subunit 5, chloroplastic (743 aa).

Helical transmembrane passes span 9–29, 40–60, 89–109, 125–145, 147–167, 184–204, 219–239, 258–278, 280–300, 396–416, 425–445, 548–568, 607–627, and 723–743; these read WIIP…LLLF, WAFH…DLSI, IDPL…MVLI, FAYM…SNLI, IYIF…FWFT, IGDL…GSFE, NEVN…GAVA, TPIS…FLVA, LLPL…IGII, TAFF…CFWS, WLYS…TAFY, LLPL…GIPF, IFSV…YKPV, and YLFL…FLNL.

This sequence belongs to the complex I subunit 5 family. In terms of assembly, NDH is composed of at least 16 different subunits, 5 of which are encoded in the nucleus.

The protein resides in the plastid. Its subcellular location is the chloroplast thylakoid membrane. It carries out the reaction a plastoquinone + NADH + (n+1) H(+)(in) = a plastoquinol + NAD(+) + n H(+)(out). The enzyme catalyses a plastoquinone + NADPH + (n+1) H(+)(in) = a plastoquinol + NADP(+) + n H(+)(out). Functionally, NDH shuttles electrons from NAD(P)H:plastoquinone, via FMN and iron-sulfur (Fe-S) centers, to quinones in the photosynthetic chain and possibly in a chloroplast respiratory chain. The immediate electron acceptor for the enzyme in this species is believed to be plastoquinone. Couples the redox reaction to proton translocation, and thus conserves the redox energy in a proton gradient. The protein is NAD(P)H-quinone oxidoreductase subunit 5, chloroplastic (ndhF) of Carpenteria californica (Tree anemone).